A 612-amino-acid chain; its full sequence is MNHFPKLLSSQIGFDVAQTMLEGFDRHYRIFRDAAIHAKTLFEQADWHGLQKLARDRITSYDERVEECVELLEDEYDAENIDDEVWQQIKLHYIGLLTTHRQPECAETFFNSVCCKILHRSYFSNDFIFVRPAISTEYIENDEPAAKPTYRAYYPGKDGLAATLERIVTNFQLEPPFEDLTRDVGCVMQAIQDAFGVFDEAPNFQIHVLSSLFYRNKSAYIIGRIINGDLLMPFAVPLRHVKPGVLALDTVLLKRDQLLIIFSFSHSYFLVDMEVPSAYVEFLGTIMQGKPKAEIYTSVGLQKQGKNLFYRDLLHHLSHSSDQFIIAPGIKGLVMLVFTLPSFPYVFKLIKDSFPPPKETTRAQIKEKYQLVKRHDRLGRMADTLEYSSVALPVSRLDEALVRELEKEVPSLIEYDGDSLVIRHMYIERRMVPLNLFLQNGNDEDIEHGIKEYGNAIKELMQANIFPGDMLYKNFGVTRHGRVVFYDYDEIEYLTDCNVRAVPAPRNEEDEMSGEPWYSVGPHDIFPETYGTFLLGDPRVRRSFMQHHADFFDPALWQRHKDHLLKGELADFFPYDGSVRFCMRYPERFADAAGAASNEQDAPDAGRSVRAA.

Residues 327 to 333 (APGIKGL) and Lys348 each bind ATP. Asp383 is a catalytic residue. Residues 593–612 (AGAASNEQDAPDAGRSVRAA) are disordered.

This sequence belongs to the AceK family.

It localises to the cytoplasm. The catalysed reaction is L-seryl-[isocitrate dehydrogenase] + ATP = O-phospho-L-seryl-[isocitrate dehydrogenase] + ADP + H(+). Functionally, bifunctional enzyme which can phosphorylate or dephosphorylate isocitrate dehydrogenase (IDH) on a specific serine residue. This is a regulatory mechanism which enables bacteria to bypass the Krebs cycle via the glyoxylate shunt in response to the source of carbon. When bacteria are grown on glucose, IDH is fully active and unphosphorylated, but when grown on acetate or ethanol, the activity of IDH declines drastically concomitant with its phosphorylation. The sequence is that of Isocitrate dehydrogenase kinase/phosphatase from Paraburkholderia xenovorans (strain LB400).